A 115-amino-acid chain; its full sequence is DNA-binding protein Ta0052 (115 aa).

The segment at 1 to 41 is disordered; that stretch reads MDDDEELERIRRQQLESMQRQAMQEQMREEQEKQREAERAR. Residues 15 to 25 are compositionally biased toward low complexity; it reads LESMQRQAMQE. Residues 26–41 are compositionally biased toward basic and acidic residues; the sequence is QMREEQEKQREAERAR.

It belongs to the PDCD5 family.

The sequence is that of DNA-binding protein Ta0052 from Thermoplasma acidophilum (strain ATCC 25905 / DSM 1728 / JCM 9062 / NBRC 15155 / AMRC-C165).